A 452-amino-acid chain; its full sequence is Tubulin alpha-1 chain (452 aa).

Position 11 (Gln11) interacts with GTP. Lys40 bears the N6-acetyllysine mark. Glu71, Gly144, Thr145, Thr179, Asn206, and Asn228 together coordinate GTP. Glu71 is a Mg(2+) binding site. The active site involves Glu254. Residues 430–452 form a disordered region; it reads KDYEEVGAESGDGDDDGLGEEEY. Residues 431 to 452 show a composition bias toward acidic residues; it reads DYEEVGAESGDGDDDGLGEEEY.

Belongs to the tubulin family. In terms of assembly, dimer of alpha and beta chains. A typical microtubule is a hollow water-filled tube with an outer diameter of 25 nm and an inner diameter of 15 nM. Alpha-beta heterodimers associate head-to-tail to form protofilaments running lengthwise along the microtubule wall with the beta-tubulin subunit facing the microtubule plus end conferring a structural polarity. Microtubules usually have 13 protofilaments but different protofilament numbers can be found in some organisms and specialized cells. Mg(2+) is required as a cofactor. In terms of processing, undergoes a tyrosination/detyrosination cycle, the cyclic removal and re-addition of a C-terminal tyrosine residue by the enzymes tubulin tyrosine carboxypeptidase (TTCP) and tubulin tyrosine ligase (TTL), respectively. Post-translationally, acetylation of alpha chains at Lys-40 stabilizes microtubules and affects affinity and processivity of microtubule motors. This modification has a role in multiple cellular functions, ranging from cell motility, cell cycle progression or cell differentiation to intracellular trafficking and signaling.

It localises to the cytoplasm. The protein resides in the cytoskeleton. The catalysed reaction is GTP + H2O = GDP + phosphate + H(+). In terms of biological role, tubulin is the major constituent of microtubules, a cylinder consisting of laterally associated linear protofilaments composed of alpha- and beta-tubulin heterodimers. Microtubules grow by the addition of GTP-tubulin dimers to the microtubule end, where a stabilizing cap forms. Below the cap, tubulin dimers are in GDP-bound state, owing to GTPase activity of alpha-tubulin. This chain is Tubulin alpha-1 chain (TUBA1), found in Pisum sativum (Garden pea).